We begin with the raw amino-acid sequence, 562 residues long: Nicotinate phosphoribosyltransferase (562 aa).

Nicotinate is bound by residues Y36, F183, and T225. H228 is modified (phosphohistidine). T397 is a 5-phospho-alpha-D-ribose 1-diphosphate binding site.

Belongs to the NAPRTase family. Mg(2+) is required as a cofactor. Requires Mn(2+) as cofactor. In terms of processing, transiently phosphorylated on a His residue during the reaction cycle. Phosphorylation strongly increases the affinity for substrates and increases the rate of nicotinate D-ribonucleotide production. Dephosphorylation regenerates the low-affinity form of the enzyme, leading to product release.

The catalysed reaction is nicotinate + 5-phospho-alpha-D-ribose 1-diphosphate + ATP + H2O = nicotinate beta-D-ribonucleotide + ADP + phosphate + diphosphate. It participates in cofactor biosynthesis; NAD(+) biosynthesis; nicotinate D-ribonucleotide from nicotinate: step 1/1. Its function is as follows. Catalyzes the first step in the biosynthesis of NAD from nicotinic acid, the ATP-dependent synthesis of beta-nicotinate D-ribonucleotide from nicotinate and 5-phospho-D-ribose 1-phosphate. Helps prevent cellular oxidative stress via its role in NAD biosynthesis. This Caenorhabditis elegans protein is Nicotinate phosphoribosyltransferase.